The primary structure comprises 263 residues: 3-methyl-2-oxobutanoate hydroxymethyltransferase (263 aa).

Asp-45 and Asp-84 together coordinate Mg(2+). Residues Asp-45–Ser-46, Asp-84, and Lys-112 contribute to the 3-methyl-2-oxobutanoate site. Glu-114 contacts Mg(2+). Glu-181 acts as the Proton acceptor in catalysis.

It belongs to the PanB family. In terms of assembly, homodecamer; pentamer of dimers. It depends on Mg(2+) as a cofactor.

The protein localises to the cytoplasm. The catalysed reaction is 3-methyl-2-oxobutanoate + (6R)-5,10-methylene-5,6,7,8-tetrahydrofolate + H2O = 2-dehydropantoate + (6S)-5,6,7,8-tetrahydrofolate. It participates in cofactor biosynthesis; (R)-pantothenate biosynthesis; (R)-pantoate from 3-methyl-2-oxobutanoate: step 1/2. Functionally, catalyzes the reversible reaction in which hydroxymethyl group from 5,10-methylenetetrahydrofolate is transferred onto alpha-ketoisovalerate to form ketopantoate. The protein is 3-methyl-2-oxobutanoate hydroxymethyltransferase of Proteus mirabilis (strain HI4320).